A 267-amino-acid chain; its full sequence is tRNA pseudouridine synthase A (267 aa).

Catalysis depends on Asp51, which acts as the Nucleophile. Tyr109 contacts substrate.

Belongs to the tRNA pseudouridine synthase TruA family. In terms of assembly, homodimer.

It carries out the reaction uridine(38/39/40) in tRNA = pseudouridine(38/39/40) in tRNA. Formation of pseudouridine at positions 38, 39 and 40 in the anticodon stem and loop of transfer RNAs. The polypeptide is tRNA pseudouridine synthase A (Staphylococcus epidermidis (strain ATCC 12228 / FDA PCI 1200)).